The primary structure comprises 367 residues: Protein SUPPRESSOR OF FRI 4 (367 aa).

Residues 7–66 (RATEKVWCYYCDREFDDEKILVQHQKAKHFKCHVCHKKLSTASGMVIHVLQVHKENVTKV) form a BED-type zinc finger. Zn(2+) contacts are provided by C38, C41, H54, and H59. Residues 246-309 (PFSAPLPVGG…PPVIANKAPS (64 aa)) are disordered. Polar residues predominate over residues 273–295 (PNNSIPGGTNAHSYASGPNTSGP).

In terms of assembly, homodimer. Component of the transcription activator complex FRI-C composed of FRI, FRL1, SUF4, FLX and FES1. Interacts with LD, ASHH2, FRL1, (via C-terminus) with FRI (via C-terminus), and with SWC6, a component of the SWR1 chromatin-remodeling complex. Binds to MED18 to regulate flowering time; recruits MED18 to FLC promoter. In terms of tissue distribution, expressed in root, shoot apex, leaves, stem and flowers. Expressed in expanding leaves, in the vasculature of fully expanded leaves, in the inflorescence, throughout young floral primordia, in the carpels of older flowers and in fertilized ovules.

It is found in the nucleus. In terms of biological role, sequence-specific DNA binding factor that recognizes the 5'-CCAAATTTTAAGTTT-3' sequence. Recruits the FRI-C complex to the FLC promoter. Required for FRI-mediated FLC activation, but has no effect on the expression of MAF1, MAF2, MAF3, MAF5, UFC and CO. Dispensable for the reactivation of FLC in early embryogenesis, but required to maintain high levels of FLC expression in later embryonic and vegetative development. This chain is Protein SUPPRESSOR OF FRI 4, found in Arabidopsis thaliana (Mouse-ear cress).